The sequence spans 487 residues: Aspartyl/glutamyl-tRNA(Asn/Gln) amidotransferase subunit B (487 aa).

It belongs to the GatB/GatE family. GatB subfamily. As to quaternary structure, heterotrimer of A, B and C subunits.

The catalysed reaction is L-glutamyl-tRNA(Gln) + L-glutamine + ATP + H2O = L-glutaminyl-tRNA(Gln) + L-glutamate + ADP + phosphate + H(+). The enzyme catalyses L-aspartyl-tRNA(Asn) + L-glutamine + ATP + H2O = L-asparaginyl-tRNA(Asn) + L-glutamate + ADP + phosphate + 2 H(+). Its function is as follows. Allows the formation of correctly charged Asn-tRNA(Asn) or Gln-tRNA(Gln) through the transamidation of misacylated Asp-tRNA(Asn) or Glu-tRNA(Gln) in organisms which lack either or both of asparaginyl-tRNA or glutaminyl-tRNA synthetases. The reaction takes place in the presence of glutamine and ATP through an activated phospho-Asp-tRNA(Asn) or phospho-Glu-tRNA(Gln). The polypeptide is Aspartyl/glutamyl-tRNA(Asn/Gln) amidotransferase subunit B (Chlamydia abortus (strain DSM 27085 / S26/3) (Chlamydophila abortus)).